Here is a 205-residue protein sequence, read N- to C-terminus: Probable anaerobic dimethyl sulfoxide reductase chain YnfG (205 aa).

4Fe-4S ferredoxin-type domains lie at 5–33, 59–89, and 90–119; these read YGFF…LGPE, FAYY…KRED, and GFVV…YNAE. Positions 14, 17, 20, 24, 67, 70, 75, 79, 99, 102, 105, 109, 126, 129, 141, and 145 each coordinate [4Fe-4S] cluster. The disordered stretch occupies residues 183–205; the sequence is IKPNANSRPTGDTTGYLANPEEV. The span at 186 to 195 shows a compositional bias: polar residues; it reads NANSRPTGDT.

The complex consists of three subunits: YnfF, the reductase; YnfG, an electron transfer protein, and YnfH, a membrane anchor protein. [4Fe-4S] cluster serves as cofactor.

Its function is as follows. Electron transfer subunit of the terminal reductase during anaerobic growth on various sulfoxide and N-oxide compounds. The protein is Probable anaerobic dimethyl sulfoxide reductase chain YnfG (ynfG) of Escherichia coli O6:H1 (strain CFT073 / ATCC 700928 / UPEC).